The chain runs to 510 residues: Major facilitator superfamily domain-containing protein 8 (510 aa).

Topologically, residues 1–38 are cytoplasmic; sequence MASIDDDDDERTPLLQDSHIGELVETQKQLKSRWWSIR. Positions 14–15 match the Dileucine internalization motif motif; it reads LL. Residues 39-59 form a helical membrane-spanning segment; it reads VMYLTMFLSSVGFSIVMTSIW. Topologically, residues 60-72 are extracellular; the sequence is PYLQKVDQSADAS. The helical transmembrane segment at 73–93 threads the bilayer; it reads FLGWVIASFSLGQMVASPLFG. Residues 94–103 lie on the Cytoplasmic side of the membrane; that stretch reads LWSNHRPRRE. Residues 104 to 124 form a helical membrane-spanning segment; the sequence is PLVVSITILVAASCLYAYVHV. The Extracellular segment spans residues 125–132; the sequence is PASHNKYY. A helical membrane pass occupies residues 133–155; it reads MLLARTFVGFGSGNVAVVRSYVA. Topologically, residues 156–171 are cytoplasmic; it reads GATSLSERTGAMANIS. A helical transmembrane segment spans residues 172–192; sequence AFQAMGFILGPAFQAALSVIG. Residues 193–209 are Extracellular-facing; the sequence is ETGITINGISLQVNMYT. A helical transmembrane segment spans residues 210-230; that stretch reads APALMGALLGIGNIILIFAIF. Residues 231–264 are Cytoplasmic-facing; that stretch reads REHRVDDLEKNVSSINSESEVTDVEKANEGPIDQ. Residues 265–285 traverse the membrane as a helical segment; sequence IAVISSNILFFVVLFVFAIFE. At 286-302 the chain is on the extracellular side; that stretch reads TISTPLTMDMYAWTRTQ. The chain crosses the membrane as a helical span at residues 303–323; that stretch reads AVFYNGIILAAVGVESVIVFL. The Cytoplasmic segment spans residues 324-335; that stretch reads TVKILCKKTGER. Residues 336–356 form a helical membrane-spanning segment; the sequence is VLLLGGLAVIWIGFFILLPWG. The Extracellular segment spans residues 357–406; it reads NQMPKIQWTDLQNATIHNTTQWTSSIPSSGNHSVEPTGCPVIQTWCLYTP. N-linked (GlcNAc...) asparagine glycans are attached at residues asparagine 369 and asparagine 374. The helical transmembrane segment at 407–427 threads the bilayer; that stretch reads VIHLAQYLTSDILIGVGYPIC. Topologically, residues 428 to 445 are cytoplasmic; it reads NVMSYTLYSKIIGPKPQG. Residues 446 to 466 form a helical membrane-spanning segment; that stretch reads LYMGWLTAAGSAARTLGPVFV. Residues 467–476 lie on the Extracellular side of the membrane; the sequence is SQIYTHLGTR. The helical transmembrane segment at 477 to 497 threads the bilayer; it reads WTFGIICAFVALSLLHLTAVY. At 498–510 the chain is on the cytoplasmic side; it reads KRLIPFSTRYERL.

It belongs to the major facilitator superfamily.

The protein resides in the lysosome membrane. Functionally, may be a carrier that transport small solutes by using chemiosmotic ion gradients. The chain is Major facilitator superfamily domain-containing protein 8 (mfsd8) from Xenopus laevis (African clawed frog).